A 767-amino-acid polypeptide reads, in one-letter code: General transcription and DNA repair factor IIH helicase/translocase subunit XPB1 (767 aa).

The interval 1–51 (MGNGERGRPNKKMKYGGKDDQKMKNIQNAEDYYDDADEDSRDGEGEEKKRD) is disordered. The span at 31-41 (DYYDDADEDSR) shows a compositional bias: acidic residues. The span at 42-51 (DGEGEEKKRD) shows a compositional bias: basic and acidic residues. In terms of domain architecture, Helicase ATP-binding spans 293 to 455 (MFGNGRARSG…DLNFLIGPKL (163 aa)). 306–313 (LPCGAGKS) is a binding site for ATP. The DEVH box motif lies at 408-411 (DEVH). Residues 510 to 676 (RACEFLIRFH…SLPPPDAGSS (167 aa)) form the Helicase C-terminal domain. The segment at 742-767 (RHKSGQQFKKPKDPTKRHNLFKKRYV) is disordered. The short motif at 750–766 (KKPKDPTKRHNLFKKRY) is the Nuclear localization signal element. Basic residues predominate over residues 758–767 (RHNLFKKRYV).

This sequence belongs to the helicase family. RAD25/XPB subfamily. In terms of assembly, component of the 7-subunit TFIIH core complex composed of XPB, XPD, TFB1/GTF2H1, GTF2H2/P44, TFB4/GTF2H3, TFB2/GTF2H4 and TFB5/GTF2H5, which is active in NER. The core complex associates with the 3-subunit CDK-activating kinase (CAK) module composed of CYCH1/cyclin H1, CDKD and MAT1/At4g30820 to form the 10-subunit holoenzyme (holo-TFIIH) active in transcription. As to expression, expressed ubiquitously.

The protein localises to the nucleus. It carries out the reaction Couples ATP hydrolysis with the unwinding of duplex DNA by translocating in the 3'-5' direction.. The enzyme catalyses ATP + H2O = ADP + phosphate + H(+). Functionally, ATP-dependent 3'-5' DNA helicase/translocase; binds dsDNA rather than ssDNA, unzipping it in a translocase rather than classical helicase activity. Component of the general transcription and DNA repair factor IIH (TFIIH) core complex. When complexed to CDK-activating kinase (CAK), involved in RNA transcription by RNA polymerase II. The ATPase activity of XPB/ERCC3, but not its helicase activity, is required for DNA opening; it may wrap around the damaged DNA wedging it open, causing localized melting and twisting that allows XPD/ERCC2 helicase to anchor. The ATP-dependent helicase activity of XPB/ERCC3 may be required for promoter escape. Also involved in transcription-coupled nucleotide excision repair (NER) of damaged DNA. In NER, TFIIH acts by opening DNA around the lesion to allow the excision of the damaged oligonucleotide and its replacement by a new DNA fragment. The structure of the TFIIH transcription complex differs from the NER-TFIIH complex. Partially complements UV sensitivity of a yeast SSL2 mutation. Required during the early stages of development, including seed germination. This chain is General transcription and DNA repair factor IIH helicase/translocase subunit XPB1 (XPB1), found in Arabidopsis thaliana (Mouse-ear cress).